Consider the following 250-residue polypeptide: 5-oxoprolinase subunit A (250 aa).

This sequence belongs to the LamB/PxpA family. Forms a complex composed of PxpA, PxpB and PxpC.

The catalysed reaction is 5-oxo-L-proline + ATP + 2 H2O = L-glutamate + ADP + phosphate + H(+). Functionally, catalyzes the cleavage of 5-oxoproline to form L-glutamate coupled to the hydrolysis of ATP to ADP and inorganic phosphate. This Pseudomonas fluorescens (strain ATCC BAA-477 / NRRL B-23932 / Pf-5) protein is 5-oxoprolinase subunit A.